Reading from the N-terminus, the 132-residue chain is Small ribosomal subunit protein uS12 (132 aa).

Asp-89 is subject to 3-methylthioaspartic acid. A disordered region spans residues 102 to 132; the sequence is LDTSGVADRKQSRSKYGAKVPKAGAAPAKKK. Positions 118–132 are enriched in low complexity; that stretch reads GAKVPKAGAAPAKKK.

Belongs to the universal ribosomal protein uS12 family. In terms of assembly, part of the 30S ribosomal subunit. Contacts proteins S8 and S17. May interact with IF1 in the 30S initiation complex.

Its function is as follows. With S4 and S5 plays an important role in translational accuracy. In terms of biological role, interacts with and stabilizes bases of the 16S rRNA that are involved in tRNA selection in the A site and with the mRNA backbone. Located at the interface of the 30S and 50S subunits, it traverses the body of the 30S subunit contacting proteins on the other side and probably holding the rRNA structure together. The combined cluster of proteins S8, S12 and S17 appears to hold together the shoulder and platform of the 30S subunit. This Chlorobaculum tepidum (strain ATCC 49652 / DSM 12025 / NBRC 103806 / TLS) (Chlorobium tepidum) protein is Small ribosomal subunit protein uS12.